A 951-amino-acid chain; its full sequence is AP-1 complex subunit beta-1 (951 aa).

Lysine 318 is subject to N6-acetyllysine. At tyrosine 574 the chain carries 3'-nitrotyrosine.

Belongs to the adaptor complexes large subunit family. Adaptor protein complex 1 (AP-1) is a heterotetramer composed of two large adaptins (gamma-type subunit AP1G1 and beta-type subunit AP1B1), a medium adaptin (mu-type subunit AP1M1 or AP1M2) and a small adaptin (sigma-type subunit AP1S1 or AP1S2 or AP1S3).

The protein localises to the cytoplasmic vesicle. It is found in the clathrin-coated vesicle membrane. It localises to the golgi apparatus. Functionally, subunit of clathrin-associated adaptor protein complex 1 that plays a role in protein sorting in the late-Golgi/trans-Golgi network (TGN) and/or endosomes. The AP complexes mediate both the recruitment of clathrin to membranes and the recognition of sorting signals within the cytosolic tails of transmembrane cargo molecules. The protein is AP-1 complex subunit beta-1 (AP2B1) of Bos taurus (Bovine).